A 741-amino-acid polypeptide reads, in one-letter code: Ethylene receptor 2 (741 aa).

3 consecutive transmembrane segments (helical) span residues 23–43 (ISDF…IYFV), 53–73 (WVLV…LINL), and 92–112 (IMTA…IPDL). Cu cation is bound by residues Cys-65 and His-69. The GAF domain maps to 158–307 (DRHTILKTTL…VVADQVAVAL (150 aa)). Positions 350 to 589 (VMNHEMRTPM…TFVVKLGIPE (240 aa)) constitute a Histidine kinase domain. Position 353 is a phosphohistidine; by autocatalysis (His-353). Residues 615 to 732 (KVLLLDDNGV…KMRNVLSNLL (118 aa)) form the Response regulatory domain. 4-aspartylphosphate is present on Asp-663.

The protein belongs to the ethylene receptor family. As to quaternary structure, homodimer; disulfide-linked. Requires Cu cation as cofactor. In terms of processing, activation probably requires a transfer of a phosphate group between a His in the transmitter domain and an Asp of the receiver domain.

It localises to the endoplasmic reticulum membrane. The catalysed reaction is ATP + protein L-histidine = ADP + protein N-phospho-L-histidine.. In terms of biological role, may act early in the ethylene signal transduction pathway, possibly as an ethylene receptor, or as a regulator of the pathway. The chain is Ethylene receptor 2 (ETR2) from Pelargonium hortorum (Common geranium).